A 113-amino-acid polypeptide reads, in one-letter code: Large ribosomal subunit protein uL22 (113 aa).

The protein belongs to the universal ribosomal protein uL22 family. As to quaternary structure, part of the 50S ribosomal subunit.

Functionally, this protein binds specifically to 23S rRNA; its binding is stimulated by other ribosomal proteins, e.g. L4, L17, and L20. It is important during the early stages of 50S assembly. It makes multiple contacts with different domains of the 23S rRNA in the assembled 50S subunit and ribosome. In terms of biological role, the globular domain of the protein is located near the polypeptide exit tunnel on the outside of the subunit, while an extended beta-hairpin is found that lines the wall of the exit tunnel in the center of the 70S ribosome. The protein is Large ribosomal subunit protein uL22 of Bacillus thuringiensis subsp. konkukian (strain 97-27).